Reading from the N-terminus, the 659-residue chain is Pollen receptor-like kinase 6 (659 aa).

Positions 1–26 are cleaved as a signal peptide; that stretch reads MAAAVLNPGFFLLILLLSFSISPSLQ. The Extracellular segment spans residues 27–266; sequence YVSESEPLVR…SVPETSNKAA (240 aa). C58 and C67 form a disulfide bridge. LRR repeat units lie at residues 95–118, 120–142, 143–167, 168–190, and 192–214; these read LPNL…FFKL, GLKS…FFKD, MSKL…ITQL, PQLE…EFGS, and KNLK…SIAD. N128 carries an N-linked (GlcNAc...) asparagine glycan. An N-linked (GlcNAc...) asparagine glycan is attached at N179. A glycan (N-linked (GlcNAc...) asparagine) is linked at N221. The tract at residues 226–242 is LURE peptides binding; the sequence is EYLCGPVVDVGCENIEL. C229 and C237 form a disulfide bridge. The disordered stretch occupies residues 241–260; it reads ELNDPQEGQPPSKPSSSVPE. A helical membrane pass occupies residues 267 to 287; it reads INAIMVSISLLLLFFIIVGVI. Residues 288-659 lie on the Cytoplasmic side of the membrane; that stretch reads KRRNKKKNPD…AVRRIEQVKT (372 aa). Residues 312 to 354 are disordered; sequence VRISESSSTTAKRSTDSSRKRGGHSDDGSTKKGVSNIGKGGNG. Residues 324-341 show a composition bias toward basic and acidic residues; that stretch reads RSTDSSRKRGGHSDDGST. In terms of domain architecture, Protein kinase spans 384-659; sequence KAAAEVLGNG…AVRRIEQVKT (276 aa). ATP is bound by residues 390-398 and K412; that span reads LGNGSLGSA. S464 carries the phosphoserine modification. Residues T484 and T557 each carry the phosphothreonine modification. S561 carries the post-translational modification Phosphoserine.

This sequence belongs to the protein kinase superfamily. Ser/Thr protein kinase family. Interacts with ROPGEF8, ROPGEF9, ROPGEF12, ROPGEF13, PRK3, LIP1 and LIP2. Binds to LURE peptides via its LRR repeats; interacts with LURE1.1, LURE1.2, LURE1.3 and LURE1.4. As to expression, expressed specifically in the pollen tube, predominantly at the tip.

The protein localises to the cell membrane. The protein resides in the cytoplasmic granule. Functionally, key receptor for sensing species-specific attractants in cooperation with other pollen receptor-like kinases. Essential for pollen tube reorientation toward attractant peptides. This chain is Pollen receptor-like kinase 6, found in Arabidopsis thaliana (Mouse-ear cress).